Consider the following 496-residue polypeptide: 3-octaprenyl-4-hydroxybenzoate carboxy-lyase (496 aa).

Position 181 (asparagine 181) interacts with Mn(2+). Prenylated FMN is bound by residues isoleucine 184–arginine 186, arginine 198–leucine 200, and arginine 203–glycine 204. Glutamate 247 contributes to the Mn(2+) binding site. Aspartate 296 functions as the Proton donor in the catalytic mechanism.

This sequence belongs to the UbiD family. In terms of assembly, homohexamer. Requires prenylated FMN as cofactor. Mn(2+) is required as a cofactor.

The protein resides in the cell membrane. The enzyme catalyses a 4-hydroxy-3-(all-trans-polyprenyl)benzoate + H(+) = a 2-(all-trans-polyprenyl)phenol + CO2. The protein operates within cofactor biosynthesis; ubiquinone biosynthesis. Its function is as follows. Catalyzes the decarboxylation of 3-octaprenyl-4-hydroxy benzoate to 2-octaprenylphenol, an intermediate step in ubiquinone biosynthesis. The protein is 3-octaprenyl-4-hydroxybenzoate carboxy-lyase of Aromatoleum aromaticum (strain DSM 19018 / LMG 30748 / EbN1) (Azoarcus sp. (strain EbN1)).